Consider the following 605-residue polypeptide: NADH-ubiquinone oxidoreductase chain 5 (605 aa).

The next 16 helical transmembrane spans lie at 11-31, 49-69, 77-97, 120-140, 141-161, 178-198, 202-222, 244-264, 273-295, 302-322, 325-345, 371-391, 408-425, 457-477, 488-508, and 584-604; these read ILIT…LPPI, LSLT…ISSL, LAMS…ALFI, MFLL…NFFP, MLVG…WWHG, LADI…SSLD, FFAT…MAAM, VSAL…LIGM, GFSE…KALL, IIAF…GLNH, LAFM…LCAG, ASCF…TGFF, LWAT…IYSL, LALA…PIYT, LAAL…ISLA, and IKTY…IMLF.

Belongs to the complex I subunit 5 family.

The protein resides in the mitochondrion inner membrane. The catalysed reaction is a ubiquinone + NADH + 5 H(+)(in) = a ubiquinol + NAD(+) + 4 H(+)(out). In terms of biological role, core subunit of the mitochondrial membrane respiratory chain NADH dehydrogenase (Complex I) that is believed to belong to the minimal assembly required for catalysis. Complex I functions in the transfer of electrons from NADH to the respiratory chain. The immediate electron acceptor for the enzyme is believed to be ubiquinone. This chain is NADH-ubiquinone oxidoreductase chain 5 (MT-ND5), found in Pelomedusa subrufa (African side-necked turtle).